The following is a 213-amino-acid chain: RNA chaperone ProQ (213 aa).

The tract at residues glutamate 105 to alanine 150 is disordered. Over residues alanine 115–alanine 127 the composition is skewed to low complexity.

The protein belongs to the ProQ family.

The protein resides in the cytoplasm. RNA chaperone with significant RNA binding, RNA strand exchange and RNA duplexing activities. This chain is RNA chaperone ProQ, found in Shewanella oneidensis (strain ATCC 700550 / JCM 31522 / CIP 106686 / LMG 19005 / NCIMB 14063 / MR-1).